We begin with the raw amino-acid sequence, 498 residues long: Glycerol kinase (498 aa).

Thr12 contacts ADP. Residues Thr12, Thr13, and Ser14 each contribute to the ATP site. Position 12 (Thr12) interacts with sn-glycerol 3-phosphate. Residue Arg16 participates in ADP binding. Residues Arg82, Glu83, Tyr135, and Asp245 each contribute to the sn-glycerol 3-phosphate site. Residues Arg82, Glu83, Tyr135, Asp245, and Gln246 each contribute to the glycerol site. Residues Thr267 and Gly310 each coordinate ADP. Positions 267, 310, 314, and 411 each coordinate ATP. Residues Gly411 and Asn415 each coordinate ADP.

It belongs to the FGGY kinase family. Homotetramer and homodimer (in equilibrium).

The catalysed reaction is glycerol + ATP = sn-glycerol 3-phosphate + ADP + H(+). It functions in the pathway polyol metabolism; glycerol degradation via glycerol kinase pathway; sn-glycerol 3-phosphate from glycerol: step 1/1. With respect to regulation, activated by phosphorylation and inhibited by fructose 1,6-bisphosphate (FBP). Functionally, key enzyme in the regulation of glycerol uptake and metabolism. Catalyzes the phosphorylation of glycerol to yield sn-glycerol 3-phosphate. The polypeptide is Glycerol kinase (Clostridium botulinum (strain Eklund 17B / Type B)).